The following is a 294-amino-acid chain: Nucleotide-binding protein CLK_2809 (294 aa).

Residue 8-15 (GLSGAGKT) coordinates ATP. 59–62 (DIRG) contributes to the GTP binding site.

The protein belongs to the RapZ-like family.

Its function is as follows. Displays ATPase and GTPase activities. In Clostridium botulinum (strain Loch Maree / Type A3), this protein is Nucleotide-binding protein CLK_2809.